Here is a 268-residue protein sequence, read N- to C-terminus: Phosphatidylglycerol--prolipoprotein diacylglyceryl transferase (268 aa).

Transmembrane regions (helical) follow at residues 10–30 (VALA…LIGI), 56–76 (LVFW…VLFY), 92–112 (WKGG…ALWF), 120–140 (FFEL…AGRI), 174–194 (PSQL…LWLF), 202–222 (MAVS…VEFV), and 236–256 (WLTQ…VLIW). Arg139 serves as a coordination point for a 1,2-diacyl-sn-glycero-3-phospho-(1'-sn-glycerol).

Belongs to the Lgt family.

The protein resides in the cell inner membrane. It carries out the reaction L-cysteinyl-[prolipoprotein] + a 1,2-diacyl-sn-glycero-3-phospho-(1'-sn-glycerol) = an S-1,2-diacyl-sn-glyceryl-L-cysteinyl-[prolipoprotein] + sn-glycerol 1-phosphate + H(+). The protein operates within protein modification; lipoprotein biosynthesis (diacylglyceryl transfer). Catalyzes the transfer of the diacylglyceryl group from phosphatidylglycerol to the sulfhydryl group of the N-terminal cysteine of a prolipoprotein, the first step in the formation of mature lipoproteins. This chain is Phosphatidylglycerol--prolipoprotein diacylglyceryl transferase, found in Pseudomonas putida (strain ATCC 47054 / DSM 6125 / CFBP 8728 / NCIMB 11950 / KT2440).